The following is a 256-amino-acid chain: Cell division protein ZapD (256 aa).

This sequence belongs to the ZapD family. In terms of assembly, interacts with FtsZ.

It localises to the cytoplasm. Functionally, cell division factor that enhances FtsZ-ring assembly. Directly interacts with FtsZ and promotes bundling of FtsZ protofilaments, with a reduction in FtsZ GTPase activity. This Aromatoleum aromaticum (strain DSM 19018 / LMG 30748 / EbN1) (Azoarcus sp. (strain EbN1)) protein is Cell division protein ZapD.